The primary structure comprises 94 residues: Co-chaperonin GroES (94 aa).

This sequence belongs to the GroES chaperonin family. Heptamer of 7 subunits arranged in a ring. Interacts with the chaperonin GroEL.

The protein resides in the cytoplasm. In terms of biological role, together with the chaperonin GroEL, plays an essential role in assisting protein folding. The GroEL-GroES system forms a nano-cage that allows encapsulation of the non-native substrate proteins and provides a physical environment optimized to promote and accelerate protein folding. GroES binds to the apical surface of the GroEL ring, thereby capping the opening of the GroEL channel. This chain is Co-chaperonin GroES, found in Streptococcus pneumoniae (strain CGSP14).